The following is a 147-amino-acid chain: Hemoglobin subunit epsilon-M (147 aa).

The region spanning 3 to 147 (HFTPEDKTNI…VSSALGHKYH (145 aa)) is the Globin domain. 2 positions are modified to phosphoserine: Ser-14 and Ser-51. His-64 and His-93 together coordinate heme b.

This sequence belongs to the globin family. As to expression, red blood cells.

In terms of biological role, hemoglobin epsilon chain is a beta-type chain found in early embryos. In Didelphis virginiana (North American opossum), this protein is Hemoglobin subunit epsilon-M (HBE1).